The chain runs to 542 residues: Dihydropyrimidinase (542 aa).

Zn(2+) is bound by residues H62, H64, and K167. N6-carboxylysine is present on K167. Substrate is bound at residue Y172. Residues H199 and H255 each contribute to the Zn(2+) site. S331 serves as a coordination point for substrate. D358 is a Zn(2+) binding site. A substrate-binding site is contributed by N392.

Belongs to the metallo-dependent hydrolases superfamily. Hydantoinase/dihydropyrimidinase family. In terms of assembly, homotetramer. Zn(2+) is required as a cofactor. Post-translationally, carboxylation allows a single lysine to coordinate two zinc ions.

It catalyses the reaction 5,6-dihydrouracil + H2O = 3-(carbamoylamino)propanoate + H(+). Its function is as follows. Catalyzes the second step of the reductive pyrimidine degradation, the reversible hydrolytic ring opening of dihydropyrimidines. Can catalyze the ring opening of 5,6-dihydrouracil to N-carbamyl-alanine and of 5,6-dihydrothymine to N-carbamyl-amino isobutyrate. In Lachancea kluyveri (strain ATCC 58438 / CBS 3082 / BCRC 21498 / NBRC 1685 / JCM 7257 / NCYC 543 / NRRL Y-12651) (Yeast), this protein is Dihydropyrimidinase (PYD2).